The chain runs to 340 residues: NADH-quinone oxidoreductase subunit H 2 (340 aa).

A run of 8 helical transmembrane segments spans residues 10–30 (LIVA…ILLL), 84–104 (FLFK…FVAI), 126–146 (VALL…IFGG), 172–192 (MGFA…LDIV), 198–218 (VWNI…GLAE), 255–275 (VIVL…WNGI), 279–299 (MPPL…FIWF), and 318–338 (VLLP…GAAA).

Belongs to the complex I subunit 1 family. As to quaternary structure, NDH-1 is composed of 14 different subunits. Subunits NuoA, H, J, K, L, M, N constitute the membrane sector of the complex.

It is found in the cell inner membrane. It carries out the reaction a quinone + NADH + 5 H(+)(in) = a quinol + NAD(+) + 4 H(+)(out). Its function is as follows. NDH-1 shuttles electrons from NADH, via FMN and iron-sulfur (Fe-S) centers, to quinones in the respiratory chain. The immediate electron acceptor for the enzyme in this species is believed to be ubiquinone. Couples the redox reaction to proton translocation (for every two electrons transferred, four hydrogen ions are translocated across the cytoplasmic membrane), and thus conserves the redox energy in a proton gradient. This subunit may bind ubiquinone. This Rhizobium etli (strain ATCC 51251 / DSM 11541 / JCM 21823 / NBRC 15573 / CFN 42) protein is NADH-quinone oxidoreductase subunit H 2.